The following is a 607-amino-acid chain: ATP-dependent RNA helicase-like protein DB10 (607 aa).

The span at 1 to 10 shows a compositional bias: polar residues; that stretch reads MAVVTASSAG. 2 disordered regions span residues 1-25 and 66-108; these read MAVV…KPWK and VFVS…DGTS. One can recognise a WW domain in the interval 18–52; the sequence is PTLPKPWKGLVDGTTGFIYFWNPETNDTQYERPVP. A compositionally biased stretch (polar residues) spans 89–98; it reads RGSNNKIARS. The span at 99–108 shows a compositional bias: basic and acidic residues; that stretch reads SSDRFHDGTS. Positions 145 to 173 match the Q motif motif; that stretch reads TSFEATGFPSEIVREMHQAGFSAPTPIQA. The region spanning 176–350 is the Helicase ATP-binding domain; that stretch reads WPIALQGRDI…ADLLVNSVQV (175 aa). Position 189–196 (189–196) interacts with ATP; sequence AKTGSGKT. The short motif at 298–301 is the DEAD box element; that stretch reads DEAD. Residues 379–523 form the Helicase C-terminal domain; that stretch reads RVEQILRSKE…CVPTELRDMA (145 aa). The disordered stretch occupies residues 519–607; sequence LRDMASRGGG…WSGKKSRFTD (89 aa). The segment covering 538 to 548 has biased composition (gly residues); sequence SGPGGRGGRGG. Residues 562–574 show a composition bias toward basic and acidic residues; it reads GYDRGSRDSDRYG.

This sequence belongs to the DEAD box helicase family.

The enzyme catalyses ATP + H2O = ADP + phosphate + H(+). The protein is ATP-dependent RNA helicase-like protein DB10 of Nicotiana sylvestris (Wood tobacco).